Here is a 244-residue protein sequence, read N- to C-terminus: DNA repair protein RecO (244 aa).

Belongs to the RecO family.

Functionally, involved in DNA repair and RecF pathway recombination. This Geobacter metallireducens (strain ATCC 53774 / DSM 7210 / GS-15) protein is DNA repair protein RecO.